A 505-amino-acid polypeptide reads, in one-letter code: Prenylcysteine oxidase 1 (505 aa).

The signal sequence occupies residues 1 to 28 (MGRFAAALVGSLFWLGLLLCGLGSLASA). N-linked (GlcNAc...) asparagine glycosylation is found at N196, N323, and N353.

The protein belongs to the prenylcysteine oxidase family. The cofactor is FAD. In terms of tissue distribution, highly expressed in the liver, kidney, heart and brain.

Its subcellular location is the lysosome. The catalysed reaction is an S-polyprenyl-L-cysteine + O2 + H2O = a polyprenal + L-cysteine + H2O2. It carries out the reaction S-(2E,6E)-farnesyl-L-cysteine + O2 + H2O = (2E,6E)-farnesal + L-cysteine + H2O2. The enzyme catalyses [(2E,6E,10E)-geranylgeranyl]-L-cysteine + O2 + H2O = (2E,6E,10E)-geranylgeranial + L-cysteine + H2O2. Its function is as follows. Prenylcysteine oxidase that cleaves the thioether bond of prenyl-L-cysteines, such as farnesylcysteine and geranylgeranylcysteine. Only active against free prenylcysteines and not prenylcysteine residues within prenylated proteins or peptides. Involved in the final step in the degradation of prenylated proteins, by degrading prenylcysteines after the protein has been degraded. This is Prenylcysteine oxidase 1 from Mus musculus (Mouse).